Reading from the N-terminus, the 280-residue chain is Four and a half LIM domains protein 1 (280 aa).

The residue at position 2 (S2) is an N-acetylserine. Position 4 is an N6-acetyllysine (K4). The C4-type zinc finger occupies 7 to 31; that stretch reads CHYCRDPLQGKKYVQKDGRHCCLKC. LIM zinc-binding domains lie at 40–92, 101–153, 162–212, and 221–276; these read CVEC…CNKC, CKGC…CVTC, CVKC…CVDC, and CAGC…CPDC. K86 is covalently cross-linked (Glycyl lysine isopeptide (Lys-Gly) (interchain with G-Cter in SUMO2)).

It is found in the cytoplasm. Functionally, may have an involvement in muscle development or hypertrophy. Isoform 2 binds to RBP-J and plays a negative regulatory role in the RBP-J-mediated transcription in mammalian systems. The chain is Four and a half LIM domains protein 1 (Fhl1) from Rattus norvegicus (Rat).